A 122-amino-acid chain; its full sequence is MIQMQTCLDVADNSGARQVMCIKVLGGSKRRYANVGDIIKVSVKDAIPRGRVKKGEVYNAVVVRTRKGVRRADGSLIRFDNNAAVILNNQHQPIGTRIFGPVTRELRSEKFMKIISLAPEVL.

This sequence belongs to the universal ribosomal protein uL14 family. Part of the 50S ribosomal subunit. Forms a cluster with proteins L3 and L19. In the 70S ribosome, L14 and L19 interact and together make contacts with the 16S rRNA in bridges B5 and B8.

Functionally, binds to 23S rRNA. Forms part of two intersubunit bridges in the 70S ribosome. The polypeptide is Large ribosomal subunit protein uL14 (Methylococcus capsulatus (strain ATCC 33009 / NCIMB 11132 / Bath)).